The chain runs to 143 residues: 3-dehydroquinate dehydratase (143 aa).

Residue Tyr-22 is the Proton acceptor of the active site. Substrate contacts are provided by Asn-73, His-79, and Asp-86. The active-site Proton donor is His-99. Substrate is bound by residues 100-101 and Arg-110; that span reads IS.

Belongs to the type-II 3-dehydroquinase family. Homododecamer.

It carries out the reaction 3-dehydroquinate = 3-dehydroshikimate + H2O. It functions in the pathway metabolic intermediate biosynthesis; chorismate biosynthesis; chorismate from D-erythrose 4-phosphate and phosphoenolpyruvate: step 3/7. In terms of biological role, catalyzes a trans-dehydration via an enolate intermediate. The protein is 3-dehydroquinate dehydratase of Mycobacterium avium (strain 104).